A 525-amino-acid polypeptide reads, in one-letter code: Bifunctional purine biosynthesis protein PurH (525 aa).

Residues 10 to 156 (HRIPIRRALV…KNHPSVAIVT (147 aa)) enclose the MGS-like domain.

The protein belongs to the PurH family.

It catalyses the reaction (6R)-10-formyltetrahydrofolate + 5-amino-1-(5-phospho-beta-D-ribosyl)imidazole-4-carboxamide = 5-formamido-1-(5-phospho-D-ribosyl)imidazole-4-carboxamide + (6S)-5,6,7,8-tetrahydrofolate. The enzyme catalyses IMP + H2O = 5-formamido-1-(5-phospho-D-ribosyl)imidazole-4-carboxamide. Its pathway is purine metabolism; IMP biosynthesis via de novo pathway; 5-formamido-1-(5-phospho-D-ribosyl)imidazole-4-carboxamide from 5-amino-1-(5-phospho-D-ribosyl)imidazole-4-carboxamide (10-formyl THF route): step 1/1. It participates in purine metabolism; IMP biosynthesis via de novo pathway; IMP from 5-formamido-1-(5-phospho-D-ribosyl)imidazole-4-carboxamide: step 1/1. The polypeptide is Bifunctional purine biosynthesis protein PurH (Nocardioides sp. (strain ATCC BAA-499 / JS614)).